A 298-amino-acid chain; its full sequence is Acetylglutamate kinase (298 aa).

Substrate contacts are provided by residues 69–70 (GG), Arg-91, and Asn-196.

Belongs to the acetylglutamate kinase family. ArgB subfamily.

It localises to the cytoplasm. It catalyses the reaction N-acetyl-L-glutamate + ATP = N-acetyl-L-glutamyl 5-phosphate + ADP. It functions in the pathway amino-acid biosynthesis; L-arginine biosynthesis; N(2)-acetyl-L-ornithine from L-glutamate: step 2/4. Its function is as follows. Catalyzes the ATP-dependent phosphorylation of N-acetyl-L-glutamate. The chain is Acetylglutamate kinase from Rhodopseudomonas palustris (strain TIE-1).